Here is a 1031-residue protein sequence, read N- to C-terminus: Protein translocase subunit SecA (1031 aa).

ATP is bound by residues Gln-143, 161–165 (GEGKT), and Asp-661. The span at 963–973 (KERLVAKHEES) shows a compositional bias: basic and acidic residues. The disordered stretch occupies residues 963-1031 (KERLVAKHEE…GKKYKNCCGR (69 aa)). 4 residues coordinate Zn(2+): Cys-1017, Cys-1019, Cys-1028, and Cys-1029.

It belongs to the SecA family. In terms of assembly, monomer and homodimer. Part of the essential Sec protein translocation apparatus which comprises SecA, SecYEG and auxiliary proteins SecDF. Other proteins may also be involved. Requires Zn(2+) as cofactor.

Its subcellular location is the cell inner membrane. The protein localises to the cytoplasm. The catalysed reaction is ATP + H2O + cellular proteinSide 1 = ADP + phosphate + cellular proteinSide 2.. Functionally, part of the Sec protein translocase complex. Interacts with the SecYEG preprotein conducting channel. Has a central role in coupling the hydrolysis of ATP to the transfer of proteins into and across the cell membrane, serving as an ATP-driven molecular motor driving the stepwise translocation of polypeptide chains across the membrane. The chain is Protein translocase subunit SecA from Prosthecochloris aestuarii (strain DSM 271 / SK 413).